A 144-amino-acid polypeptide reads, in one-letter code: Granulocyte-macrophage colony-stimulating factor (144 aa).

A signal peptide spans 1 to 17; it reads MWLQNLLFLGIVVYSFS. O-linked (GalNAc...) serine glycosylation is present at S22. The O-linked (GalNAc...) threonine glycan is linked to T27. 2 cysteine pairs are disulfide-bonded: C71–C113 and C105–C138. N86 is a glycosylation site (N-linked (GlcNAc...) asparagine).

The protein belongs to the GM-CSF family. As to quaternary structure, monomer. The signaling GM-CSF receptor complex is a dodecamer of two head-to-head hexamers of two alpha, two beta, and two ligand subunits.

It localises to the secreted. In terms of biological role, cytokine that stimulates the growth and differentiation of hematopoietic precursor cells from various lineages, including granulocytes, macrophages, eosinophils and erythrocytes. This Rattus norvegicus (Rat) protein is Granulocyte-macrophage colony-stimulating factor (Csf2).